Consider the following 234-residue polypeptide: MNDSQDKIVAIVPAAGIGSRMGAEIPKQYLLIDEKTILQLTLELLLTHPKIDCVVVALHPEDQFFKGLPLSSHHKLHTVVGGSERADSVLACLNHLGGDCWAMVHDAARPCLTHGDIDKLIASRQRFPQGAILAAPVRDTMKRGNADGTVKETVCRERLWHALTPQLFPAALLKGNLEQALAQGANITDEASAMEWAGVSPGLVDGRVDNIKITHPDDLLLAGLFLGNAHSLER.

The protein belongs to the IspD/TarI cytidylyltransferase family. IspD subfamily.

The enzyme catalyses 2-C-methyl-D-erythritol 4-phosphate + CTP + H(+) = 4-CDP-2-C-methyl-D-erythritol + diphosphate. It functions in the pathway isoprenoid biosynthesis; isopentenyl diphosphate biosynthesis via DXP pathway; isopentenyl diphosphate from 1-deoxy-D-xylulose 5-phosphate: step 2/6. Catalyzes the formation of 4-diphosphocytidyl-2-C-methyl-D-erythritol from CTP and 2-C-methyl-D-erythritol 4-phosphate (MEP). The protein is 2-C-methyl-D-erythritol 4-phosphate cytidylyltransferase of Shewanella sediminis (strain HAW-EB3).